The following is a 358-amino-acid chain: Fructose-bisphosphate aldolase 1, cytoplasmic (358 aa).

Substrate is bound at residue arginine 39. The active-site Proton acceptor is the glutamate 183. Lysine 225 (schiff-base intermediate with dihydroxyacetone-P) is an active-site residue. Substrate contacts are provided by residues 266-268 (SGG) and arginine 298.

Belongs to the class I fructose-bisphosphate aldolase family. As to quaternary structure, homotetramer. In terms of tissue distribution, expressed in callus.

It is found in the cytoplasm. The protein resides in the cytosol. It catalyses the reaction beta-D-fructose 1,6-bisphosphate = D-glyceraldehyde 3-phosphate + dihydroxyacetone phosphate. Its pathway is carbohydrate degradation; glycolysis; D-glyceraldehyde 3-phosphate and glycerone phosphate from D-glucose: step 4/4. Functionally, fructose-bisphosphate aldolase that plays a key role in glycolysis and gluconeogenesis. Involved in gibberellin-mediated root growth. May be regulated by CDPK13. Associates with vacuolar proton ATPase (V-ATPase) and may regulate the V-ATPase-mediated control of root cell elongation. The chain is Fructose-bisphosphate aldolase 1, cytoplasmic from Oryza sativa subsp. japonica (Rice).